The chain runs to 200 residues: ATP-dependent Clp protease proteolytic subunit (200 aa).

Residue S105 is the Nucleophile of the active site. Residue H130 is part of the active site.

This sequence belongs to the peptidase S14 family. As to quaternary structure, fourteen ClpP subunits assemble into 2 heptameric rings which stack back to back to give a disk-like structure with a central cavity, resembling the structure of eukaryotic proteasomes.

Its subcellular location is the cytoplasm. The enzyme catalyses Hydrolysis of proteins to small peptides in the presence of ATP and magnesium. alpha-casein is the usual test substrate. In the absence of ATP, only oligopeptides shorter than five residues are hydrolyzed (such as succinyl-Leu-Tyr-|-NHMec, and Leu-Tyr-Leu-|-Tyr-Trp, in which cleavage of the -Tyr-|-Leu- and -Tyr-|-Trp bonds also occurs).. Cleaves peptides in various proteins in a process that requires ATP hydrolysis. Has a chymotrypsin-like activity. Plays a major role in the degradation of misfolded proteins. In Hydrogenovibrio crunogenus (strain DSM 25203 / XCL-2) (Thiomicrospira crunogena), this protein is ATP-dependent Clp protease proteolytic subunit.